Consider the following 206-residue polypeptide: RNA-binding protein (206 aa).

A disordered region spans residues 87-206; sequence PRGMQRGNRR…SGAKSKRRPR (120 aa). Basic and acidic residues predominate over residues 109–132; that stretch reads MPKDDSNDRKKAKTSKDRKVEKSS.

This sequence belongs to the phytoreovirus RNA-binding protein family.

It is found in the host cytoplasm. Its function is as follows. Constituent of viral factories. Binds to ssRNA and dsRNA. The protein is RNA-binding protein of Rice gall dwarf virus (RGDV).